Reading from the N-terminus, the 110-residue chain is Mitochondrial pyruvate carrier 1 (110 aa).

The next 2 membrane-spanning stretches (helical) occupy residues 20–36 (HFWG…AGLV) and 44–61 (MISG…ALFM).

Belongs to the mitochondrial pyruvate carrier (MPC) (TC 2.A.105) family.

The protein localises to the mitochondrion inner membrane. Its function is as follows. Mediates the uptake of pyruvate into mitochondria. The sequence is that of Mitochondrial pyruvate carrier 1 from Arabidopsis thaliana (Mouse-ear cress).